An 80-amino-acid polypeptide reads, in one-letter code: Putative defensin-like protein 28 (80 aa).

The signal sequence occupies residues 1–22 (MLRANVVVSLVIFAALMQCMNG).

It belongs to the DEFL family.

The protein resides in the secreted. In Arabidopsis thaliana (Mouse-ear cress), this protein is Putative defensin-like protein 28.